Here is a 483-residue protein sequence, read N- to C-terminus: Aspartyl/glutamyl-tRNA(Asn/Gln) amidotransferase subunit B (483 aa).

This sequence belongs to the GatB/GatE family. GatB subfamily. Heterotrimer of A, B and C subunits.

It carries out the reaction L-glutamyl-tRNA(Gln) + L-glutamine + ATP + H2O = L-glutaminyl-tRNA(Gln) + L-glutamate + ADP + phosphate + H(+). The catalysed reaction is L-aspartyl-tRNA(Asn) + L-glutamine + ATP + H2O = L-asparaginyl-tRNA(Asn) + L-glutamate + ADP + phosphate + 2 H(+). Functionally, allows the formation of correctly charged Asn-tRNA(Asn) or Gln-tRNA(Gln) through the transamidation of misacylated Asp-tRNA(Asn) or Glu-tRNA(Gln) in organisms which lack either or both of asparaginyl-tRNA or glutaminyl-tRNA synthetases. The reaction takes place in the presence of glutamine and ATP through an activated phospho-Asp-tRNA(Asn) or phospho-Glu-tRNA(Gln). This Rickettsia bellii (strain RML369-C) protein is Aspartyl/glutamyl-tRNA(Asn/Gln) amidotransferase subunit B.